Reading from the N-terminus, the 402-residue chain is Thyroid hormone receptor alpha (402 aa).

A disordered region spans residues 1–22; the sequence is MEQKPSTLDPLSEPEDTRWLDG. Residues 1–50 form a modulating region; it reads MEQKPSTLDPLSEPEDTRWLDGKRKRKSSQCLVKSSMSGYIPSYLDKDEQ. The residue at position 12 (Ser12) is a Phosphoserine; by CK2. Ser28 carries the phosphoserine modification. Zn(2+)-binding residues include Cys51, Cys54, Cys68, Cys71, Cys89, Cys95, Cys105, and Cys108. 2 consecutive NR C4-type zinc fingers follow at residues 51–71 and 89–113; these read CVVC…CAGC and CKYD…FKKC. The nuclear receptor DNA-binding region spans 51–125; it reads CVVCGDKATG…VGMAMDLVLY (75 aa). The NR LBD domain maps to 161–402; that stretch reads EEWELIHVVT…ELFPPLFLEV (242 aa). 3,3',5-triiodo-L-thyronine contacts are provided by Arg226 and Ser275.

This sequence belongs to the nuclear hormone receptor family. NR1 subfamily. Probably interacts with SFPQ.

The protein localises to the nucleus. Nuclear hormone receptor that can act as a repressor or activator of transcription. High affinity receptor for thyroid hormones, including triiodothyronine and thyroxine. The protein is Thyroid hormone receptor alpha (THRA) of Pygoscelis adeliae (Adelie penguin).